The following is a 421-amino-acid chain: UPF0300 protein C737.04 (421 aa).

It belongs to the UPF0300 family.

It localises to the cytoplasm. The chain is UPF0300 protein C737.04 from Schizosaccharomyces pombe (strain 972 / ATCC 24843) (Fission yeast).